Here is a 452-residue protein sequence, read N- to C-terminus: 1,3-beta-glucanosyltransferase gel1 (452 aa).

The N-terminal stretch at 1–19 (MKASAVTAALAVGASTVLA) is a signal peptide. C71 and C100 form a disulfide bridge. (1,3-beta-D-glucosyl)n is bound by residues Y89, N159, E160, D201, and R206. Residue E160 is the Proton donor of the active site. 2 disulfide bridges follow: C215-C345 and C233-C264. N249 carries an N-linked (GlcNAc...) asparagine glycan. The active-site Nucleophile is the E261. Residue Y292 participates in (1,3-beta-D-glucosyl)n binding. The span at 325 to 340 (EKTSNPSGDGNYNKTG) shows a compositional bias: polar residues. The interval 325 to 419 (EKTSNPSGDG…SGTSTSSKGA (95 aa)) is disordered. N337 carries N-linked (GlcNAc...) asparagine glycosylation. The span at 393–419 (STATAEPGSGSATGSSSSGTSTSSKGA) shows a compositional bias: low complexity. A419 is lipidated: GPI-like-anchor amidated alanine. The propeptide at 420–452 (AAGLTVPSLTMAPVVVGAVTLLSTVFGAGLVLL) is removed in mature form.

It belongs to the glycosyl hydrolase 72 family. The GPI-like anchor contains a phosphoceramide lipid group.

The protein resides in the cell membrane. Functionally, splits internally a 1,3-beta-glucan molecule and transfers the newly generated reducing end (the donor) to the non-reducing end of another 1,3-beta-glucan molecule (the acceptor) forming a 1,3-beta linkage, resulting in the elongation of 1,3-beta-glucan chains in the cell wall. Involved in cell wall morphogenesis. The polypeptide is 1,3-beta-glucanosyltransferase gel1 (gel1) (Aspergillus fumigatus (strain ATCC MYA-4609 / CBS 101355 / FGSC A1100 / Af293) (Neosartorya fumigata)).